The sequence spans 221 residues: Histone H1C (221 aa).

2 stretches are compositionally biased toward low complexity: residues 1 to 11 (MTETAATETTP) and 27 to 44 (KKAAGGAKAKKPSGPSAS). Disordered stretches follow at residues 1–44 (MTET…PSAS) and 123–221 (AKKK…AAKK). Residues 39-112 (SGPSASELIV…GASGSFKLNK (74 aa)) form the H15 domain. Composition is skewed to basic residues over residues 123–150 (AKKKLVAPKAKKPVAAKKKPKSPKKPKK) and 158–221 (SPKK…AAKK).

Belongs to the histone H1/H5 family.

It localises to the nucleus. The protein localises to the chromosome. In terms of biological role, histones H1 are necessary for the condensation of nucleosome chains into higher-order structures. In Xenopus laevis (African clawed frog), this protein is Histone H1C.